We begin with the raw amino-acid sequence, 141 residues long: Hemoglobin subunit alpha-A (141 aa).

The region spanning 1 to 141 is the Globin domain; the sequence is VLSSGDKANV…VSTVLTSKYR (141 aa). Residue histidine 58 participates in O2 binding. Histidine 87 is a heme b binding site.

It belongs to the globin family. Heterotetramer of two alpha chains and two beta chains. As to expression, red blood cells.

Functionally, involved in oxygen transport from the lung to the various peripheral tissues. In Caretta caretta (Loggerhead sea turtle), this protein is Hemoglobin subunit alpha-A (HBAA).